Consider the following 329-residue polypeptide: MEKNIKALWKNFQLKLEKIKHYRKLYEQQIKEYKKKITGLNNETDANEISRIKNEIEILNRLIKIKNTKDNVIKKDFDEKNVFEIRNFNFWYNKNKQVLFDINLDIKRNKITALIGKSGCGKSTFIRCLNKLNDLNENTRWTGDIYFLGKNINSGIINDLTLRTSVGMVFQKLTPFNFSIFENIAYGIRAHGIHNKNAINEIVRQALISAALWDEVKDNLHRNANTLSGGQQQRLCIARAIALQPDVLLMDEPTSALDSIATNSIELLIQQLKEKFTIVIVTHSMAQTIRITDETIFFADGRVIEQGTTKQIFTKPKQKATNSYISGKN.

One can recognise an ABC transporter domain in the interval 83-325 (FEIRNFNFWY…PKQKATNSYI (243 aa)). 116-123 (GKSGCGKS) contacts ATP.

It belongs to the ABC transporter superfamily. Phosphate importer (TC 3.A.1.7) family. In terms of assembly, the complex is composed of two ATP-binding proteins (PstB), two transmembrane proteins (PstC and PstA) and a solute-binding protein (PstS).

It localises to the cell membrane. It carries out the reaction phosphate(out) + ATP + H2O = ADP + 2 phosphate(in) + H(+). Functionally, part of the ABC transporter complex PstSACB involved in phosphate import. Responsible for energy coupling to the transport system. This is Phosphate import ATP-binding protein PstB from Mycoplasma genitalium (strain ATCC 33530 / DSM 19775 / NCTC 10195 / G37) (Mycoplasmoides genitalium).